A 183-amino-acid chain; its full sequence is ATP synthase subunit b, chloroplastic (183 aa).

A helical transmembrane segment spans residues 27 to 49 (LATNLINLTVVVGVLIFFGKGVL).

It belongs to the ATPase B chain family. As to quaternary structure, F-type ATPases have 2 components, F(1) - the catalytic core - and F(0) - the membrane proton channel. F(1) has five subunits: alpha(3), beta(3), gamma(1), delta(1), epsilon(1). F(0) has four main subunits: a(1), b(1), b'(1) and c(10-14). The alpha and beta chains form an alternating ring which encloses part of the gamma chain. F(1) is attached to F(0) by a central stalk formed by the gamma and epsilon chains, while a peripheral stalk is formed by the delta, b and b' chains.

The protein localises to the plastid. The protein resides in the chloroplast thylakoid membrane. In terms of biological role, f(1)F(0) ATP synthase produces ATP from ADP in the presence of a proton or sodium gradient. F-type ATPases consist of two structural domains, F(1) containing the extramembraneous catalytic core and F(0) containing the membrane proton channel, linked together by a central stalk and a peripheral stalk. During catalysis, ATP synthesis in the catalytic domain of F(1) is coupled via a rotary mechanism of the central stalk subunits to proton translocation. Component of the F(0) channel, it forms part of the peripheral stalk, linking F(1) to F(0). The polypeptide is ATP synthase subunit b, chloroplastic (Hordeum vulgare (Barley)).